Here is a 515-residue protein sequence, read N- to C-terminus: Histone-lysine N-methyltransferase SET5 (515 aa).

The SET domain occupies 114–386; sequence SKVEIRECEE…KDEELVTTYV (273 aa). Over residues 452 to 462 the composition is skewed to polar residues; it reads ALQRSNGGSSS. A disordered region spans residues 452–476; that stretch reads ALQRSNGGSSSDLRRKSSIRNRKPD.

This sequence belongs to the class V-like SAM-binding methyltransferase superfamily. Histone-lysine methyltransferase family. SET5 subfamily.

It is found in the nucleus. The protein resides in the chromosome. The protein localises to the cytoplasm. The enzyme catalyses L-lysyl-[histone] + S-adenosyl-L-methionine = N(6)-methyl-L-lysyl-[histone] + S-adenosyl-L-homocysteine + H(+). Histone methyltransferase that monomethylates 'Lys-5', 'Lys-8' and 'Lys-12' of histone H4 (H4K5me1, H4K8me1 and H4K12me1, respectively), thereby controlling gene expression and remodeling chromatin structures. The polypeptide is Histone-lysine N-methyltransferase SET5 (SET5) (Candida glabrata (strain ATCC 2001 / BCRC 20586 / JCM 3761 / NBRC 0622 / NRRL Y-65 / CBS 138) (Yeast)).